A 220-amino-acid chain; its full sequence is Small ribosomal subunit protein uS3c (220 aa).

Residues 43–120 (IQHYVEKNTR…RLNIAIIRVA (78 aa)) form the KH type-2 domain.

It belongs to the universal ribosomal protein uS3 family. Part of the 30S ribosomal subunit.

The protein localises to the plastid. It localises to the chloroplast. This chain is Small ribosomal subunit protein uS3c (rps3), found in Piper cenocladum (Ant piper).